The following is a 433-amino-acid chain: Ornithine decarboxylase, chloroplastic (433 aa).

K96 carries the post-translational modification N6-(pyridoxal phosphate)lysine. Pyridoxal 5'-phosphate is bound by residues S228, G266, and 299–302; that span reads EPGR. 342 to 343 serves as a coordination point for substrate; it reads YD. C378 (proton donor; shared with dimeric partner) is an active-site residue. D379 contributes to the substrate binding site. Y407 lines the pyridoxal 5'-phosphate pocket.

This sequence belongs to the Orn/Lys/Arg decarboxylase class-II family. In terms of assembly, homodimer. Only the dimer is catalytically active, as the active sites are constructed of residues from both monomers. Requires pyridoxal 5'-phosphate as cofactor.

The protein localises to the plastid. The protein resides in the chloroplast. The catalysed reaction is L-ornithine + H(+) = putrescine + CO2. The protein operates within alkaloid biosynthesis; nicotine biosynthesis. Its pathway is amine and polyamine biosynthesis; putrescine biosynthesis via L-ornithine pathway; putrescine from L-ornithine: step 1/1. Its function is as follows. Involved in the biosynthesis of pyridine alkaloid natural products, leading mainly to the production of anabasine, anatabine, nicotine and nornicotine, effective deterrents against herbivores with antiparasitic and pesticide properties (neurotoxins); nornicotine serves as the precursor in the synthesis of the carcinogen compound N'-nitrosonornicotine (NNN). Catalyzes the first and rate-limiting step of polyamine biosynthesis that converts ornithine into putrescine, which is the precursor for the polyamines, spermidine and spermine. Polyamines are essential for cell proliferation and are implicated in cellular processes, ranging from DNA replication to apoptosis. This Nicotiana glauca (Glaucous tobacco) protein is Ornithine decarboxylase, chloroplastic.